The following is a 368-amino-acid chain: MKTSIHRPSQALVDLSAIHFNIEQLKAHLPQDVEKWAVVKANAYGHGAVAVSSYIDDIVDGFCVSNIDEALELREGGLDKKILILGVSAIEVVPLAIQNKITLTVASLEWLDLLEASSLSLQGLVVHLKVDSGMGRIGFRDRQPLQEAINRLQVAGVQVEGIFTHFATADEADASKFEEQLACFKGILAELDALPPIIHASNSATSLWHTDTVMNAVRLGDIIYGLNPSGSVLELPYDIKPALSLVSELVHVKEVEAGADVGYGATYTADEGQFIGTIPLGYADGWTRDMQGFDVLIDGQRCPIVGRISMDQITVRLPEKYPLGTPVVFIGKSGTESISATDVAEKRGTINYEVVCLISDRVPRIYKN.

Lys40 functions as the Proton acceptor; specific for D-alanine in the catalytic mechanism. At Lys40 the chain carries N6-(pyridoxal phosphate)lysine. Arg136 lines the substrate pocket. The active-site Proton acceptor; specific for L-alanine is Tyr263. Met310 serves as a coordination point for substrate.

It belongs to the alanine racemase family. Requires pyridoxal 5'-phosphate as cofactor.

It carries out the reaction L-alanine = D-alanine. The protein operates within amino-acid biosynthesis; D-alanine biosynthesis; D-alanine from L-alanine: step 1/1. Catalyzes the interconversion of L-alanine and D-alanine. May also act on other amino acids. The protein is Alanine racemase (alr) of Streptococcus gordonii (strain Challis / ATCC 35105 / BCRC 15272 / CH1 / DL1 / V288).